The primary structure comprises 1396 residues: DNA-directed RNA polymerase subunit beta' (1396 aa).

The Zn(2+) site is built by Cys70, Cys72, Cys85, and Cys88. Asp460, Asp462, and Asp464 together coordinate Mg(2+). Residues Cys814, Cys888, Cys895, and Cys898 each coordinate Zn(2+).

The protein belongs to the RNA polymerase beta' chain family. As to quaternary structure, the RNAP catalytic core consists of 2 alpha, 1 beta, 1 beta' and 1 omega subunit. When a sigma factor is associated with the core the holoenzyme is formed, which can initiate transcription. It depends on Mg(2+) as a cofactor. The cofactor is Zn(2+).

The catalysed reaction is RNA(n) + a ribonucleoside 5'-triphosphate = RNA(n+1) + diphosphate. DNA-dependent RNA polymerase catalyzes the transcription of DNA into RNA using the four ribonucleoside triphosphates as substrates. This chain is DNA-directed RNA polymerase subunit beta', found in Chromobacterium violaceum (strain ATCC 12472 / DSM 30191 / JCM 1249 / CCUG 213 / NBRC 12614 / NCIMB 9131 / NCTC 9757 / MK).